Reading from the N-terminus, the 219-residue chain is Glutamine transport system permease protein GlnP (219 aa).

The Periplasmic portion of the chain corresponds to 1–22; it reads MQFDWSAIWPAIPLLIEGAKMT. Residues 19–209 enclose the ABC transmembrane type-1 domain; the sequence is AKMTLWISVL…IITLVLSFIL (191 aa). Residues 23 to 43 traverse the membrane as a helical segment; the sequence is LWISVLGLAGGLVIGLLAGFA. Over 44 to 53 the chain is Cytoplasmic; it reads RTFGGWIANH. A helical membrane pass occupies residues 54–74; that stretch reads VALVFIEVIRGTPIVVQVMFI. Residues 75–88 lie on the Periplasmic side of the membrane; that stretch reads YFALPMAFNDLRID. A helical transmembrane segment spans residues 89 to 109; sequence PFTAAVVTIMINSGAYIAEIT. Over 110–150 the chain is Cytoplasmic; sequence RGAVLSIHKGFREAGLALGLSRWETIRYVILPLALRRMLPP. A helical transmembrane segment spans residues 151-171; the sequence is LGNQWIISIKDTSLFIVIGVA. At 172 to 187 the chain is on the periplasmic side; sequence ELTRQGQEIIAGNFRA. The helical transmembrane segment at 188–208 threads the bilayer; that stretch reads LEIWSAVAVFYLIITLVLSFI. Residues 209-219 lie on the Cytoplasmic side of the membrane; that stretch reads LRRLERRMKIL.

This sequence belongs to the binding-protein-dependent transport system permease family. HisMQ subfamily.

The protein localises to the cell inner membrane. Functionally, part of the binding-protein-dependent transport system for glutamine; probably responsible for the translocation of the substrate across the membrane. In Escherichia coli O6:H1 (strain CFT073 / ATCC 700928 / UPEC), this protein is Glutamine transport system permease protein GlnP (glnP).